An 833-amino-acid chain; its full sequence is Piwi-like protein 2 (833 aa).

Residues 227 to 353 (RINRVLNDNS…IPGELCFLCG (127 aa)) enclose the PAZ domain. A disordered region spans residues 313-338 (PMRRERKKKDEEGVEKEKEKEAPEEK). Over residues 320–338 (KKDEEGVEKEKEKEAPEEK) the composition is skewed to basic and acidic residues. In terms of domain architecture, Piwi spans 515-815 (KMALVFVPDD…LAELVGKVHK (301 aa)).

This sequence belongs to the argonaute family. Piwi subfamily. In terms of tissue distribution, expressed in dividing adult stem cells.

Its function is as follows. Required for the production of functional progeny from adult somatic stem cells (neoblasts). This is Piwi-like protein 2 (wi-2) from Schmidtea mediterranea (Freshwater planarian flatworm).